The sequence spans 282 residues: uncharacterized protein (282 aa).

One can recognise an N-acetyltransferase domain in the interval 5–140 (DELIKLHEEH…SFQPYTKKLD (136 aa)).

It belongs to the acetyltransferase family.

This is an uncharacterized protein from Bacillus subtilis (strain 168).